Here is a 284-residue protein sequence, read N- to C-terminus: Nucleotide-binding protein VF_0384 (284 aa).

Glycine 8–serine 15 lines the ATP pocket. Aspartate 56–asparagine 59 lines the GTP pocket.

The protein belongs to the RapZ-like family.

Displays ATPase and GTPase activities. This chain is Nucleotide-binding protein VF_0384, found in Aliivibrio fischeri (strain ATCC 700601 / ES114) (Vibrio fischeri).